We begin with the raw amino-acid sequence, 828 residues long: Cadherin-22 (828 aa).

The signal sequence occupies residues 1 to 34; it reads MRPRPEGRGLRAGVALSPALLLLLLLPPPPTLLG. Residues 36-624 are Extracellular-facing; that stretch reads LWAAGTPSPS…AFVMAASLSP (589 aa). 5 consecutive Cadherin domains span residues 64 to 168, 169 to 277, 278 to 394, 395 to 498, and 499 to 616; these read WVWN…EPRF, LHGP…PPRF, PQKM…PPEF, RPPS…NPPE, and LATP…TTAF. Asparagine 162 carries N-linked (GlcNAc...) asparagine glycosylation. N-linked (GlcNAc...) asparagine glycosylation is found at asparagine 466 and asparagine 612. A helical membrane pass occupies residues 625-645; the sequence is GALIALLVCVLILVVLVLLIL. Residues 646-828 lie on the Cytoplasmic side of the membrane; sequence TLRRHHKSHL…HRGDDEAQAS (183 aa). Residues 702-719 show a composition bias toward gly residues; it reads GGGSAGGGAGGGSGGGAG. The disordered stretch occupies residues 702 to 745; the sequence is GGGSAGGGAGGGSGGGAGSPPQAHLPSERHSLPQGPPSPEPDFS.

It localises to the cell membrane. In terms of biological role, cadherins are calcium-dependent cell adhesion proteins. They preferentially interact with themselves in a homophilic manner in connecting cells; cadherins may thus contribute to the sorting of heterogeneous cell types. PB-cadherins may have a role in the morphological organization of pituitary gland and brain tissues. The protein is Cadherin-22 (CDH22) of Homo sapiens (Human).